Here is a 296-residue protein sequence, read N- to C-terminus: CTD kinase subunit gamma (296 aa).

The tract at residues 25–44 (RDSITSSSTTTPPSSQQKLN) is disordered. A compositionally biased stretch (low complexity) spans 29–39 (TSSSTTTPPSS). A Phosphothreonine modification is found at Thr-35.

Belongs to the CTK3 family. As to quaternary structure, CTDK-I consists of three subunits, CTK1, CTK2 and CTK3 (also called alpha, beta and gamma). Interacts with CTK1. Heterodimerization with CTK2 is required to protect this subunit from degradation. Ubiquitinated. Ubiquitination leads to degradation by the 26S proteasome pathway.

Its subcellular location is the nucleus. The protein localises to the nucleolus. It localises to the cytoplasm. Gamma subunit of the CTDK-I complex, which hyperphosphorylates the C-terminal heptapeptide repeat domain (CTD) of the largest RNA polymerase II subunit. CTDK-I phosphorylates 'Ser-5' if the CTD substrate is not phosphorylated at 'Ser-5', but will phosphorylate 'Ser-2' of a CTD substrate if 'Ser-5' is already phosphorylated. CTDK-I is also more reactive toward substrates that are prephosphorylated at 'Ser-2' or 'Ser-5' compared with an unphosphorylated CTD substrate, therefore efficiently creating doubly phosphorylated CTD repeats. Involved in RNA polymerase I transcription and RNA polymerase II transcriptional elongation, and as part of the CTDK-I complex, pre-mRNA 3'-end processing and SET2 mediated H3K36 methylation. Together with CTK2, required for CTK1 CTD kinase activation. Required for DNA damage induced transcription. Involved in the adaptation to alternative carbon sources, including galactose, glycerol and ethanol, but not raffinose. Required for the integrity of the rDNA locus. In Saccharomyces cerevisiae (strain ATCC 204508 / S288c) (Baker's yeast), this protein is CTD kinase subunit gamma (CTK3).